A 1263-amino-acid polypeptide reads, in one-letter code: DNA-directed RNA polymerase subunit beta (1263 aa).

This sequence belongs to the RNA polymerase beta chain family. In terms of assembly, the RNAP catalytic core consists of 2 alpha, 1 beta, 1 beta' and 1 omega subunit. When a sigma factor is associated with the core the holoenzyme is formed, which can initiate transcription.

It catalyses the reaction RNA(n) + a ribonucleoside 5'-triphosphate = RNA(n+1) + diphosphate. Its function is as follows. DNA-dependent RNA polymerase catalyzes the transcription of DNA into RNA using the four ribonucleoside triphosphates as substrates. The sequence is that of DNA-directed RNA polymerase subunit beta from Thermotoga sp. (strain RQ2).